The following is a 103-amino-acid chain: Histone H4 (103 aa).

Gly residues predominate over residues 1–14; that stretch reads MSGRGKGGKGLGKG. The segment at 1–20 is disordered; it reads MSGRGKGGKGLGKGGAKRHR. Residue serine 2 is modified to N-acetylserine. Serine 2 carries the post-translational modification Phosphoserine. The residue at position 4 (arginine 4) is an Asymmetric dimethylarginine; by PRMT1; alternate. The residue at position 4 (arginine 4) is a Citrulline; alternate. The residue at position 4 (arginine 4) is an Omega-N-methylarginine; by PRMT1; alternate. Position 4 is a symmetric dimethylarginine; by PRMT5 and PRMT7; alternate (arginine 4). Lysine 6, lysine 9, lysine 13, and lysine 17 each carry N6-(2-hydroxyisobutyryl)lysine; alternate. Position 6 is an N6-acetyl-N6-methyllysine; alternate (lysine 6). N6-acetyllysine is present on residues lysine 6, lysine 9, lysine 13, and lysine 17. Residues lysine 6, lysine 9, lysine 13, and lysine 17 each carry the N6-butyryllysine; alternate modification. Lysine 6 is subject to N6-glutaryllysine; alternate. Lysine 6, lysine 9, lysine 13, and lysine 17 each carry N6-lactoyllysine; alternate. Lysine 9 carries the post-translational modification N6-propionyllysine; alternate. An N6-acetyl-N6-methyllysine; alternate modification is found at lysine 13. The residue at position 13 (lysine 13) is an N6-glutaryllysine; alternate. Lysine 13 is subject to N6-methyllysine; alternate. Lysine 17 is subject to N6-propionyllysine; alternate. A DNA-binding region spans residues 17–21; it reads KRHRK. An N6-methyllysine; alternate modification is found at lysine 21. N6,N6,N6-trimethyllysine; alternate is present on lysine 21. An N6,N6-dimethyllysine; alternate modification is found at lysine 21. Lysine 21 is modified (N6-methylated lysine). N6-(2-hydroxyisobutyryl)lysine; alternate occurs at positions 32 and 45. Lysine 32 is modified (N6-acetyllysine). Lysine 32 and lysine 45 each carry N6-butyryllysine; alternate. Lysine 32 carries the post-translational modification N6-glutaryllysine; alternate. Lysine 32 carries the N6-lactoyllysine; alternate modification. N6-propionyllysine; alternate is present on residues lysine 32 and lysine 45. Lysine 32 carries the post-translational modification N6-succinyllysine; alternate. Residue lysine 32 forms a Glycyl lysine isopeptide (Lys-Gly) (interchain with G-Cter in UFM1); alternate linkage. The residue at position 48 (serine 48) is a Phosphoserine; by PAK2. Tyrosine 52 bears the Phosphotyrosine mark. Residue lysine 60 is modified to N6-acetyllysine. Residues lysine 60, lysine 78, and lysine 80 each carry the N6-glutaryllysine; alternate modification. Lysine 60 carries the N6-(2-hydroxyisobutyryl)lysine modification. N6-(2-hydroxyisobutyryl)lysine; alternate occurs at positions 78 and 80. An N6-butyryllysine; alternate mark is found at lysine 78 and lysine 80. Lysine 78 carries the N6-lactoyllysine; alternate modification. 2 positions are modified to N6-propionyllysine; alternate: lysine 78 and lysine 80. At lysine 78 the chain carries N6-succinyllysine. Residue lysine 80 is modified to N6-acetyllysine. Phosphotyrosine is present on tyrosine 89. Lysine 92 is modified (N6-(2-hydroxyisobutyryl)lysine; alternate). Lysine 92 carries the post-translational modification N6-butyryllysine; alternate. At lysine 92 the chain carries N6-glutaryllysine; alternate. At lysine 92 the chain carries N6-lactoyllysine; alternate. Lysine 92 carries the post-translational modification N6-propionyllysine; alternate. At lysine 92 the chain carries N6-succinyllysine; alternate. Lysine 92 carries the post-translational modification N6-acetyllysine; alternate. Lysine 92 participates in a covalent cross-link: Glycyl lysine isopeptide (Lys-Gly) (interchain with G-Cter in ubiquitin); alternate.

This sequence belongs to the histone H4 family. In terms of assembly, the nucleosome is a histone octamer containing two molecules each of H2A, H2B, H3 and H4 assembled in one H3-H4 heterotetramer and two H2A-H2B heterodimers. The octamer wraps approximately 147 bp of DNA. Post-translationally, acetylation at Lys-6 (H4K5ac), Lys-9 (H4K8ac), Lys-13 (H4K12ac) and Lys-17 (H4K16ac) occurs in coding regions of the genome but not in heterochromatin. In terms of processing, citrullination at Arg-4 (H4R3ci) by PADI4 impairs methylation. Monomethylation and asymmetric dimethylation at Arg-4 (H4R3me1 and H4R3me2a, respectively) by PRMT1 favors acetylation at Lys-9 (H4K8ac) and Lys-13 (H4K12ac). Demethylation is performed by JMJD6. Symmetric dimethylation on Arg-4 (H4R3me2s) by the PRDM1/PRMT5 complex may play a crucial role in the germ-cell lineage. Post-translationally, monomethylated, dimethylated or trimethylated at Lys-21 (H4K20me1, H4K20me2, H4K20me3). Monomethylation is performed by KMT5A/SET8. Trimethylation is performed by KMT5B and KMT5C and induces gene silencing. Monomethylated at Lys-13 (H4K12me1) by N6AMT1; H4K12me1 modification is present at the promoters of numerous genes encoding cell cycle regulators. In terms of processing, acetyl-methylated at Lys-6 and Lys-13 (H4K5acme and H4K12acme, respectively), acetyl-methylation is an epigenetic mark of active chromatin associated with increased transcriptional initiation. Acetyl-methylation is formed by acetylation by EP300/p300 of lysine residues that are already monomethylated on the same side chain. H4K5acme and H4K12acme marks specifically bind BRD2. Phosphorylated by pak2 at Ser-48 (H4S47ph). This phosphorylation increases the association of H3.3-H4 with the histone chaperone HIRA, thus promoting nucleosome assembly of H3.3-H4 and inhibiting nucleosome assembly of H3.1-H4. Post-translationally, ubiquitinated by the CUL4-DDB-RBX1 complex in response to ultraviolet irradiation. This may weaken the interaction between histones and DNA and facilitate DNA accessibility to repair proteins. Monoubiquitinated at Lys-92 of histone H4 (H4K91ub1) in response to DNA damage. The exact role of H4K91ub1 in DNA damage response is still unclear but it may function as a licensing signal for additional histone H4 post-translational modifications such as H4 Lys-21 methylation (H4K20me). In terms of processing, sumoylated, which is associated with transcriptional repression. Butyrylation of histones marks active promoters and competes with histone acetylation. Post-translationally, glutarylation at Lys-92 (H4K91glu) destabilizes nucleosomes by promoting dissociation of the H2A-H2B dimers from nucleosomes. In terms of processing, ufmylated; monofmylated by UFL1 at Lys-32 (H4K31Ufm1) in response to DNA damage. Lactylated in macrophages by EP300/P300 by using lactoyl-CoA directly derived from endogenous or exogenous lactate, leading to stimulates gene transcription. Delactylated by SIRT3 at Lys-17 (H4K16la).

Its subcellular location is the nucleus. It is found in the chromosome. Functionally, core component of nucleosome. Nucleosomes wrap and compact DNA into chromatin, limiting DNA accessibility to the cellular machineries which require DNA as a template. Histones thereby play a central role in transcription regulation, DNA repair, DNA replication and chromosomal stability. DNA accessibility is regulated via a complex set of post-translational modifications of histones, also called histone code, and nucleosome remodeling. This Xenopus laevis (African clawed frog) protein is Histone H4.